A 236-amino-acid chain; its full sequence is Ubiquitin carboxyl-terminal hydrolase YUH1 (236 aa).

A UCH catalytic domain is found at 7 to 233; that stretch reads AVVPIESNPE…LNFAMLGLGP (227 aa). The interval 10 to 15 is interaction with ubiquitin; it reads PIESNP. Cysteine 90 functions as the Nucleophile in the catalytic mechanism. Residues 149-157 form an interaction with ubiquitin region; sequence FSTGQSEAP. The active-site Proton donor is the histidine 166. The interaction with ubiquitin stretch occupies residues 219-228; sequence NEEDVLNFAM.

The protein belongs to the peptidase C12 family.

The catalysed reaction is Thiol-dependent hydrolysis of ester, thioester, amide, peptide and isopeptide bonds formed by the C-terminal Gly of ubiquitin (a 76-residue protein attached to proteins as an intracellular targeting signal).. Deubiquitinating enzyme (DUB) that controls levels of cellular ubiquitin through processing of ubiquitin precursors and ubiquitinated proteins. Thiol protease that recognizes and hydrolyzes a peptide bond at the C-terminal glycine of either ubiquitin or RUB1. Preferentially cleaves ubiquitin from peptides and small adducts. This is Ubiquitin carboxyl-terminal hydrolase YUH1 (YUH1) from Saccharomyces cerevisiae (strain ATCC 204508 / S288c) (Baker's yeast).